A 150-amino-acid polypeptide reads, in one-letter code: Arginine repressor (150 aa).

This sequence belongs to the ArgR family.

It is found in the cytoplasm. It participates in amino-acid biosynthesis; L-arginine biosynthesis [regulation]. Regulates arginine biosynthesis genes. This Clostridium acetobutylicum (strain ATCC 824 / DSM 792 / JCM 1419 / IAM 19013 / LMG 5710 / NBRC 13948 / NRRL B-527 / VKM B-1787 / 2291 / W) protein is Arginine repressor.